Here is a 445-residue protein sequence, read N- to C-terminus: tRNA-2-methylthio-N(6)-dimethylallyladenosine synthase (445 aa).

The 117-residue stretch at 13–129 (KKLFIKTYGC…LPAMARAGRG (117 aa)) folds into the MTTase N-terminal domain. [4Fe-4S] cluster is bound by residues Cys22, Cys58, Cys92, Cys163, Cys167, and Cys170. One can recognise a Radical SAM core domain in the interval 149-383 (TRRAPAAFLT…LTSQQKAAQE (235 aa)). The region spanning 383–445 (EGMVGRELGV…PNSLAGVLAA (63 aa)) is the TRAM domain.

This sequence belongs to the methylthiotransferase family. MiaB subfamily. Monomer. [4Fe-4S] cluster serves as cofactor.

The protein resides in the cytoplasm. It carries out the reaction N(6)-dimethylallyladenosine(37) in tRNA + (sulfur carrier)-SH + AH2 + 2 S-adenosyl-L-methionine = 2-methylsulfanyl-N(6)-dimethylallyladenosine(37) in tRNA + (sulfur carrier)-H + 5'-deoxyadenosine + L-methionine + A + S-adenosyl-L-homocysteine + 2 H(+). Catalyzes the methylthiolation of N6-(dimethylallyl)adenosine (i(6)A), leading to the formation of 2-methylthio-N6-(dimethylallyl)adenosine (ms(2)i(6)A) at position 37 in tRNAs that read codons beginning with uridine. This is tRNA-2-methylthio-N(6)-dimethylallyladenosine synthase from Paracoccus denitrificans (strain Pd 1222).